Here is a 62-residue protein sequence, read N- to C-terminus: Photosystem II reaction center protein Z (62 aa).

2 helical membrane-spanning segments follow: residues 8-28 (AVFA…VVFA) and 41-61 (FSGT…NSLI).

It belongs to the PsbZ family. PSII is composed of 1 copy each of membrane proteins PsbA, PsbB, PsbC, PsbD, PsbE, PsbF, PsbH, PsbI, PsbJ, PsbK, PsbL, PsbM, PsbT, PsbY, PsbZ, Psb30/Ycf12, at least 3 peripheral proteins of the oxygen-evolving complex and a large number of cofactors. It forms dimeric complexes.

It localises to the plastid. It is found in the chloroplast thylakoid membrane. Its function is as follows. May control the interaction of photosystem II (PSII) cores with the light-harvesting antenna, regulates electron flow through the 2 photosystem reaction centers. PSII is a light-driven water plastoquinone oxidoreductase, using light energy to abstract electrons from H(2)O, generating a proton gradient subsequently used for ATP formation. The protein is Photosystem II reaction center protein Z of Pelargonium hortorum (Common geranium).